The chain runs to 311 residues: MRIVFAGTPDFAATALKTLLNAGYDIVGVYTQPDRPAGRGRKLMPSPVKQVALDTGIPVYQPVSLKPEEAQQELASLQPDVMIVAAYGLILPKAVLNIPTHGCLNIHASLLPRWRGAAPIQRAIAAGDAETGITIMQMDEGLDTGDMLLKLDTPISADDTGGSLHDRLAEMGGKAIVQAMERLAKGDLTGEVQNEAEANYAHKLSKEEGHIDWSRSAQEIERLIRAFNPWPGTFTDLGEQRIRIHQASALKQGSDKGPGTVIARERDGVDVACGTGTLRITSAQLPGSKAQSINDLINGGKQVLLPGQELN.

109–112 (SLLP) contributes to the (6S)-5,6,7,8-tetrahydrofolate binding site.

It belongs to the Fmt family.

It catalyses the reaction L-methionyl-tRNA(fMet) + (6R)-10-formyltetrahydrofolate = N-formyl-L-methionyl-tRNA(fMet) + (6S)-5,6,7,8-tetrahydrofolate + H(+). Attaches a formyl group to the free amino group of methionyl-tRNA(fMet). The formyl group appears to play a dual role in the initiator identity of N-formylmethionyl-tRNA by promoting its recognition by IF2 and preventing the misappropriation of this tRNA by the elongation apparatus. This Marinobacter nauticus (strain ATCC 700491 / DSM 11845 / VT8) (Marinobacter aquaeolei) protein is Methionyl-tRNA formyltransferase.